A 739-amino-acid chain; its full sequence is Catalase-peroxidase 2 (739 aa).

The N-terminal stretch at 1–26 is a signal peptide; the sequence is MKKSTIPTLSALTLAMSLAFGGSVIA. Positions 105–227 form a cross-link, tryptophyl-tyrosyl-methioninium (Trp-Tyr) (with M-253); sequence WHSAGVYRIF…MGATQMGLIY (123 aa). Catalysis depends on histidine 106, which acts as the Proton acceptor. A cross-link (tryptophyl-tyrosyl-methioninium (Tyr-Met) (with W-105)) is located at residues 227–253; that stretch reads YVNPEGPNGVPDPLASAKEIRDTFGRM. Heme b is bound at residue histidine 268.

It belongs to the peroxidase family. Peroxidase/catalase subfamily. In terms of assembly, homodimer or homotetramer. Heme b serves as cofactor. Formation of the three residue Trp-Tyr-Met cross-link is important for the catalase, but not the peroxidase activity of the enzyme.

The enzyme catalyses H2O2 + AH2 = A + 2 H2O. The catalysed reaction is 2 H2O2 = O2 + 2 H2O. Bifunctional enzyme with both catalase and broad-spectrum peroxidase activity. The protein is Catalase-peroxidase 2 of Shewanella sp. (strain MR-7).